The chain runs to 417 residues: Acetate kinase (417 aa).

Asparagine 7 is a Mg(2+) binding site. Lysine 14 provides a ligand contact to ATP. Arginine 104 contributes to the substrate binding site. Aspartate 162 acts as the Proton donor/acceptor in catalysis. ATP is bound by residues 222–226 (HLGNG), 297–299 (DMR), and 346–350 (GIGEN). Mg(2+) is bound at residue glutamate 401.

It belongs to the acetokinase family. Homodimer. Mg(2+) is required as a cofactor. The cofactor is Mn(2+).

It localises to the cytoplasm. It catalyses the reaction acetate + ATP = acetyl phosphate + ADP. It functions in the pathway metabolic intermediate biosynthesis; acetyl-CoA biosynthesis; acetyl-CoA from acetate: step 1/2. In terms of biological role, catalyzes the formation of acetyl phosphate from acetate and ATP. Can also catalyze the reverse reaction. In Chloroherpeton thalassium (strain ATCC 35110 / GB-78), this protein is Acetate kinase.